Consider the following 123-residue polypeptide: Large ribosomal subunit protein bL12 (123 aa).

The protein belongs to the bacterial ribosomal protein bL12 family. As to quaternary structure, homodimer. Part of the ribosomal stalk of the 50S ribosomal subunit. Forms a multimeric L10(L12)X complex, where L10 forms an elongated spine to which 2 to 4 L12 dimers bind in a sequential fashion. Binds GTP-bound translation factors.

Forms part of the ribosomal stalk which helps the ribosome interact with GTP-bound translation factors. Is thus essential for accurate translation. This chain is Large ribosomal subunit protein bL12, found in Metamycoplasma arthritidis (strain 158L3-1) (Mycoplasma arthritidis).